The following is a 347-amino-acid chain: Heat-inducible transcription repressor HrcA (347 aa).

The protein belongs to the HrcA family.

Negative regulator of class I heat shock genes (grpE-dnaK-dnaJ and groELS operons). Prevents heat-shock induction of these operons. The sequence is that of Heat-inducible transcription repressor HrcA from Laribacter hongkongensis (strain HLHK9).